A 270-amino-acid chain; its full sequence is Protein ABHD14A (270 aa).

Residues 9 to 29 traverse the membrane as a helical; Signal-anchor for type II membrane protein segment; it reads LVVLGLVLLATVLLYLLLPSM. Residue Asn61 is glycosylated (N-linked (GlcNAc...) asparagine). Residues Ser170 and Asp221 each act as charge relay system in the active site. Asn237 is a glycosylation site (N-linked (GlcNAc...) asparagine). The active-site Charge relay system is His248.

It belongs to the AB hydrolase superfamily. ABHD14 family.

It is found in the cytoplasm. Its subcellular location is the membrane. Functionally, possible role in granule neuron development. In Danio rerio (Zebrafish), this protein is Protein ABHD14A.